Reading from the N-terminus, the 391-residue chain is uncharacterized protein (391 aa).

In terms of domain architecture, OBG-type G spans 85–314 (ATAAFVGFPS…LKEKIYEKLG (230 aa)). Residues 91 to 98 (GFPSVGKS), 137 to 141 (DAPGI), and 267 to 270 (NKID) contribute to the GTP site. The 76-residue stretch at 314–389 (GFIKIYLKPQ…EDGDILTIVI (76 aa)) folds into the TGS domain.

The protein belongs to the TRAFAC class OBG-HflX-like GTPase superfamily. OBG GTPase family.

This is an uncharacterized protein from Methanocaldococcus jannaschii (strain ATCC 43067 / DSM 2661 / JAL-1 / JCM 10045 / NBRC 100440) (Methanococcus jannaschii).